We begin with the raw amino-acid sequence, 314 residues long: Malate dehydrogenase (314 aa).

Residues 11 to 16 (GSGNIG) and aspartate 35 each bind NAD(+). Positions 84 and 90 each coordinate substrate. Residues asparagine 97 and 120-122 (ITN) contribute to the NAD(+) site. Substrate contacts are provided by asparagine 122 and arginine 153. Residue histidine 177 is the Proton acceptor of the active site.

The protein belongs to the LDH/MDH superfamily. MDH type 3 family.

It catalyses the reaction (S)-malate + NAD(+) = oxaloacetate + NADH + H(+). Functionally, catalyzes the reversible oxidation of malate to oxaloacetate. This chain is Malate dehydrogenase, found in Rickettsia bellii (strain OSU 85-389).